The following is a 166-amino-acid chain: UPF0304 protein VC_1871 (166 aa).

It belongs to the UPF0304 family.

This chain is UPF0304 protein VC_1871, found in Vibrio cholerae serotype O1 (strain ATCC 39315 / El Tor Inaba N16961).